The primary structure comprises 126 residues: 13 kDa ribonucleoprotein-associated protein (126 aa).

Belongs to the eukaryotic ribosomal protein eL8 family. As to quaternary structure, component of the U3 snoRNP particle. Binds to the C'/D and B/C motifs in U3 snoRNA. Component of the 25S U4/U6.U5 tri-snRNP particle, a subcomplex of the spliceosome. Binds to the 5' stem-loop of U4 snRNA.

It localises to the nucleus. Its subcellular location is the nucleolus. In terms of biological role, common component of the spliceosome and rRNA processing machinery. In association with the spliceosomal U4/U6.U5 tri-snRNP particle, required for splicing of pre-mRNA. In association with box C/D snoRNPs, required for processing of pre-ribosomal RNA (rRNA) and site-specific 2'-O-methylation of substrate RNAs. Essential for the accumulation and stability of U4 snRNA, U6 snRNA, and box C/D snoRNAs. This is 13 kDa ribonucleoprotein-associated protein (SNU13) from Yarrowia lipolytica (strain CLIB 122 / E 150) (Yeast).